The sequence spans 333 residues: NADH-quinone oxidoreductase subunit H (333 aa).

The next 8 membrane-spanning stretches (helical) occupy residues 8–28, 75–95, 108–128, 154–174, 191–211, 251–271, 273–293, and 312–332; these read VLAA…YLVW, ILFM…FVTI, IGLL…LLAG, MLIT…IEIV, PGLF…CSLA, IVIG…CPFG, FPGV…FIWI, and ILIP…KVFA.

This sequence belongs to the complex I subunit 1 family. In terms of assembly, NDH-1 is composed of 14 different subunits. Subunits NuoA, H, J, K, L, M, N constitute the membrane sector of the complex.

It localises to the cell inner membrane. The enzyme catalyses a quinone + NADH + 5 H(+)(in) = a quinol + NAD(+) + 4 H(+)(out). Functionally, NDH-1 shuttles electrons from NADH, via FMN and iron-sulfur (Fe-S) centers, to quinones in the respiratory chain. The immediate electron acceptor for the enzyme in this species is believed to be ubiquinone. Couples the redox reaction to proton translocation (for every two electrons transferred, four hydrogen ions are translocated across the cytoplasmic membrane), and thus conserves the redox energy in a proton gradient. This subunit may bind ubiquinone. This is NADH-quinone oxidoreductase subunit H from Desulfotalea psychrophila (strain LSv54 / DSM 12343).